A 575-amino-acid polypeptide reads, in one-letter code: uncharacterized protein (575 aa).

Residues 507-536 (AHRKVGELNNKKPMTGEKPPPKNKKSPKYK) form a disordered region.

This is an uncharacterized protein from Ostreid herpesvirus 1 (isolate France) (OsHV-1).